The following is a 418-amino-acid chain: NADH-quinone oxidoreductase subunit D (418 aa).

This sequence belongs to the complex I 49 kDa subunit family. In terms of assembly, NDH-1 is composed of 14 different subunits. Subunits NuoB, C, D, E, F, and G constitute the peripheral sector of the complex.

The protein localises to the cell inner membrane. The enzyme catalyses a quinone + NADH + 5 H(+)(in) = a quinol + NAD(+) + 4 H(+)(out). Functionally, NDH-1 shuttles electrons from NADH, via FMN and iron-sulfur (Fe-S) centers, to quinones in the respiratory chain. The immediate electron acceptor for the enzyme in this species is believed to be ubiquinone. Couples the redox reaction to proton translocation (for every two electrons transferred, four hydrogen ions are translocated across the cytoplasmic membrane), and thus conserves the redox energy in a proton gradient. This Bordetella bronchiseptica (strain ATCC BAA-588 / NCTC 13252 / RB50) (Alcaligenes bronchisepticus) protein is NADH-quinone oxidoreductase subunit D.